We begin with the raw amino-acid sequence, 23 residues long: Acidic phospholipase A2 CTs-A1 (23 aa).

Ca(2+) is required as a cofactor. In terms of processing, contains 7 disulfide bonds. Expressed by the venom gland.

Its subcellular location is the secreted. The enzyme catalyses a 1,2-diacyl-sn-glycero-3-phosphocholine + H2O = a 1-acyl-sn-glycero-3-phosphocholine + a fatty acid + H(+). In terms of biological role, snake venom phospholipase A2 (PLA2) that shows a moderate inhibition of ADP-induced human platelet aggregation when tested on platelet rich plasma. Exhibits moderate hydrolytic activities and prefers the anionic micelles (dPPC with deoxycholate) to the zwitterionic micelles (dPPC with Triton X-100). PLA2 catalyzes the calcium-dependent hydrolysis of the 2-acyl groups in 3-sn-phosphoglycerides. This Trimeresurus stejnegeri (Chinese green tree viper) protein is Acidic phospholipase A2 CTs-A1.